A 502-amino-acid chain; its full sequence is Lysine--tRNA ligase (502 aa).

Mg(2+) is bound by residues glutamate 398 and glutamate 405.

This sequence belongs to the class-II aminoacyl-tRNA synthetase family. As to quaternary structure, homodimer. It depends on Mg(2+) as a cofactor.

The protein localises to the cytoplasm. The catalysed reaction is tRNA(Lys) + L-lysine + ATP = L-lysyl-tRNA(Lys) + AMP + diphosphate. The polypeptide is Lysine--tRNA ligase (Thermosipho melanesiensis (strain DSM 12029 / CIP 104789 / BI429)).